Here is a 65-residue protein sequence, read N- to C-terminus: Large ribosomal subunit protein bL35 (65 aa).

The protein belongs to the bacterial ribosomal protein bL35 family.

This is Large ribosomal subunit protein bL35 from Nitrosomonas europaea (strain ATCC 19718 / CIP 103999 / KCTC 2705 / NBRC 14298).